The chain runs to 397 residues: Phosphoglycerate kinase (397 aa).

Substrate contacts are provided by residues 21-23, Arg36, 59-62, Arg118, and Arg151; these read DFN and HCGR. ATP-binding positions include Lys201, Glu323, and 353 to 356; that span reads GGDT.

This sequence belongs to the phosphoglycerate kinase family. In terms of assembly, monomer.

It localises to the cytoplasm. It carries out the reaction (2R)-3-phosphoglycerate + ATP = (2R)-3-phospho-glyceroyl phosphate + ADP. The protein operates within carbohydrate degradation; glycolysis; pyruvate from D-glyceraldehyde 3-phosphate: step 2/5. The protein is Phosphoglycerate kinase of Bartonella tribocorum (strain CIP 105476 / IBS 506).